Here is a 373-residue protein sequence, read N- to C-terminus: Glutamate 5-kinase (373 aa).

ATP is bound at residue lysine 15. Residues serine 55, aspartate 142, and asparagine 154 each coordinate substrate. ATP-binding positions include 174-175 (TD) and 216-222 (TGGMVTK). Residues 281–359 (SGKIIVDDGA…GEIEAILGYK (79 aa)) form the PUA domain.

Belongs to the glutamate 5-kinase family.

Its subcellular location is the cytoplasm. It carries out the reaction L-glutamate + ATP = L-glutamyl 5-phosphate + ADP. It participates in amino-acid biosynthesis; L-proline biosynthesis; L-glutamate 5-semialdehyde from L-glutamate: step 1/2. Functionally, catalyzes the transfer of a phosphate group to glutamate to form L-glutamate 5-phosphate. The protein is Glutamate 5-kinase of Geobacter sulfurreducens (strain ATCC 51573 / DSM 12127 / PCA).